The primary structure comprises 444 residues: Glutamyl-tRNA reductase (444 aa).

Substrate is bound by residues 41–44 (TCNR), S102, 107–109 (ERE), and Q113. C42 (nucleophile) is an active-site residue. An NADP(+)-binding site is contributed by 181-186 (GTGSYA).

Belongs to the glutamyl-tRNA reductase family. Homodimer.

The enzyme catalyses (S)-4-amino-5-oxopentanoate + tRNA(Glu) + NADP(+) = L-glutamyl-tRNA(Glu) + NADPH + H(+). It participates in porphyrin-containing compound metabolism; protoporphyrin-IX biosynthesis; 5-aminolevulinate from L-glutamyl-tRNA(Glu): step 1/2. In terms of biological role, catalyzes the NADPH-dependent reduction of glutamyl-tRNA(Glu) to glutamate 1-semialdehyde (GSA). The chain is Glutamyl-tRNA reductase from Cutibacterium acnes (strain DSM 16379 / KPA171202) (Propionibacterium acnes).